The sequence spans 411 residues: Arginine biosynthesis bifunctional protein ArgJ (411 aa).

Residues T160, K186, T197, E283, N406, and T411 each coordinate substrate. Residue T197 is the Nucleophile of the active site.

It belongs to the ArgJ family. As to quaternary structure, heterotetramer of two alpha and two beta chains.

It is found in the cytoplasm. The catalysed reaction is N(2)-acetyl-L-ornithine + L-glutamate = N-acetyl-L-glutamate + L-ornithine. It catalyses the reaction L-glutamate + acetyl-CoA = N-acetyl-L-glutamate + CoA + H(+). It functions in the pathway amino-acid biosynthesis; L-arginine biosynthesis; L-ornithine and N-acetyl-L-glutamate from L-glutamate and N(2)-acetyl-L-ornithine (cyclic): step 1/1. The protein operates within amino-acid biosynthesis; L-arginine biosynthesis; N(2)-acetyl-L-ornithine from L-glutamate: step 1/4. Feedback inhibition by L-ornithine. In terms of biological role, catalyzes two activities which are involved in the cyclic version of arginine biosynthesis: the synthesis of N-acetylglutamate from glutamate and acetyl-CoA as the acetyl donor, and of ornithine by transacetylation between N(2)-acetylornithine and glutamate. The polypeptide is Arginine biosynthesis bifunctional protein ArgJ (Halalkalibacterium halodurans (strain ATCC BAA-125 / DSM 18197 / FERM 7344 / JCM 9153 / C-125) (Bacillus halodurans)).